Reading from the N-terminus, the 191-residue chain is Adenine phosphoribosyltransferase (191 aa).

The protein belongs to the purine/pyrimidine phosphoribosyltransferase family. As to quaternary structure, homodimer.

The protein localises to the cytoplasm. The enzyme catalyses AMP + diphosphate = 5-phospho-alpha-D-ribose 1-diphosphate + adenine. The protein operates within purine metabolism; AMP biosynthesis via salvage pathway; AMP from adenine: step 1/1. Its function is as follows. Catalyzes a salvage reaction resulting in the formation of AMP, that is energically less costly than de novo synthesis. In Bordetella bronchiseptica (strain ATCC BAA-588 / NCTC 13252 / RB50) (Alcaligenes bronchisepticus), this protein is Adenine phosphoribosyltransferase.